We begin with the raw amino-acid sequence, 425 residues long: UPF0597 protein VSAL_I0741 (425 aa).

This sequence belongs to the UPF0597 family.

This chain is UPF0597 protein VSAL_I0741, found in Aliivibrio salmonicida (strain LFI1238) (Vibrio salmonicida (strain LFI1238)).